The following is a 630-amino-acid chain: UvrABC system protein C (630 aa).

The GIY-YIG domain occupies 18-97 (TQSGVYLMKN…IKKHRPKYNI (80 aa)). Positions 207–242 (KKVIKSMTEKMMGAADEEKFEVAARLRDSIEAIKAI) constitute a UVR domain.

This sequence belongs to the UvrC family. In terms of assembly, interacts with UvrB in an incision complex.

The protein resides in the cytoplasm. Its function is as follows. The UvrABC repair system catalyzes the recognition and processing of DNA lesions. UvrC both incises the 5' and 3' sides of the lesion. The N-terminal half is responsible for the 3' incision and the C-terminal half is responsible for the 5' incision. The protein is UvrABC system protein C of Bdellovibrio bacteriovorus (strain ATCC 15356 / DSM 50701 / NCIMB 9529 / HD100).